The sequence spans 262 residues: Versicolorin reductase 1 (262 aa).

Positions 21, 67, 94, and 127 each coordinate NADP(+). Catalysis depends on proton donor residues S143 and S144. NADP(+)-binding residues include Y158, K162, I191, and T193. Residue Y158 is the Proton acceptor of the active site. K162 acts as the Lowers pKa of active site Tyr in catalysis.

This sequence belongs to the short-chain dehydrogenases/reductases (SDR) family.

Its subcellular location is the cytoplasm. It is found in the cytosol. The catalysed reaction is (4S,8R)-2,13,16,20-tetrahydroxy-7,9-dioxapentacyclo[10.8.0.0(3,10).0(4,8).0(14,19)]icosa-1(12),2,5,10,13,16,19-heptaen-18-one + NADPH + H(+) = (4S,8R,16R)-2,13,16,20-tetrahydroxy-7,9-dioxapentacyclo[10.8.0.0(3,10).0(4,8).0(14,19)]icosa-1(12),2,5,10,13,19-hexaen-18-one + NADP(+). It functions in the pathway mycotoxin biosynthesis; aflatoxin biosynthesis. Functionally, cytochrome P450 monooxygenase; part of the gene cluster that mediates the biosynthesis of aflatoxins, a group of polyketide-derived furanocoumarins, and part of the most toxic and carcinogenic compounds among the known mycotoxins. The four major aflatoxins produced by A.parasiticus are aflatoxin B1 (AFB1), aflatoxin B2 (AFB2), aflatoxin G1 (AFG1) and aflatoxin G2 (AFG2). Within the aflatoxin pathway, with the cytochrome P450 monooxygenase aflN, the versicolorin reductase aflM, is involved in conversion of VERA to demethylsterigmatocystin (DMST). The biosynthesis of aflatoxins begins with the norsolorinic acid synthase aflC that combines a hexanoyl starter unit produced by the fatty acid synthase aflA/aflB and 7 malonyl-CoA extender units to synthesize the precursor NOR. The second step is the conversion of NOR to averantin and requires the norsolorinic acid ketoreductase aflD, which catalyzes the dehydration of norsolorinic acid to form (1'S)-averantin. The norsolorinic acid reductases aflE and aflF may also play a role in the conversion of NOR to AVN. The cytochrome P450 monooxygenase aflG then catalyzes the hydroxylation of AVN to 5'hydroxyaverantin (HAVN). The next step is performed by the 5'-hydroxyaverantin dehydrogenase aflH that transforms HAVN to 5'-oxoaverantin (OAVN) which is further converted to averufin (AVF) by aflK that plays a dual role in the pathway, as a 5'-oxoaverantin cyclase that mediates conversion of 5'-oxoaverantin, as well as a versicolorin B synthase in a later step in the pathway. The averufin oxidase aflI catalyzes the conversion of AVF to versiconal hemiacetal acetate (VHA). VHA is then the substrate for the versiconal hemiacetal acetate esterase aflJ to yield versiconal (VAL). Versicolorin B synthase aflK then converts VAL to versicolorin B (VERB) by closing the bisfuran ring of aflatoxin which is required for DNA-binding, thus giving to aflatoxin its activity as a mutagen. Then, the activity of the versicolorin B desaturase aflL leads to versicolorin A (VERA). A branch point starts from VERB since it can also be converted to dihydrodemethylsterigmatocystin (DMDHST), probably also by aflL, VERA being a precursor for aflatoxins B1 and G1, and DMDHST for aflatoxins B2 and G2. Next, the versicolorin reductase aflM and the cytochrome P450 monooxygenase aflN are involved in conversion of VERA to demethylsterigmatocystin (DMST). AflX and aflY seem also involved in this step, through probable aflX-mediated epoxide ring-opening step following versicolorin A oxidation and aflY-mediated Baeyer-Villiger oxidation required for the formation of the xanthone ring. The methyltransferase aflO then leads to the modification of DMST to sterigmatocystin (ST), and of DMDHST to dihydrosterigmatocystin (DHST). Both ST and DHST are then substrates of the O-methyltransferase aflP to yield O-methylsterigmatocystin (OMST) and dihydro-O-methylsterigmatocystin (DHOMST), respectively. Finally OMST is converted to aflatoxins B1 and G1, and DHOMST to aflatoxins B2 and G2, via the action of several enzymes including O-methylsterigmatocystin oxidoreductase aflQ, the cytochrome P450 monooxygenase aflU, but also the NADH-dependent flavin oxidoreductase nadA which is specifically required for the synthesis of AFG1. The chain is Versicolorin reductase 1 from Aspergillus parasiticus (strain ATCC 56775 / NRRL 5862 / SRRC 143 / SU-1).